The following is a 194-amino-acid chain: 7-methyl-GTP pyrophosphatase (194 aa).

Residue Asp70 is the Proton acceptor of the active site.

Belongs to the Maf family. YceF subfamily. The cofactor is a divalent metal cation.

The protein resides in the cytoplasm. It carries out the reaction N(7)-methyl-GTP + H2O = N(7)-methyl-GMP + diphosphate + H(+). Functionally, nucleoside triphosphate pyrophosphatase that hydrolyzes 7-methyl-GTP (m(7)GTP). May have a dual role in cell division arrest and in preventing the incorporation of modified nucleotides into cellular nucleic acids. The chain is 7-methyl-GTP pyrophosphatase from Vibrio vulnificus (strain YJ016).